Here is a 473-residue protein sequence, read N- to C-terminus: Pre-mRNA-splicing factor prp5 (473 aa).

WD repeat units lie at residues 161 to 191, 203 to 233, 245 to 275, 287 to 317, 329 to 358, 370 to 399, and 419 to 449; these read GHLG…KIWD, GHIA…KCWD, GHLS…RVWD, GHKS…RLWD, HHKK…KHWK, GHNA…CFWD, and DSEA…KIYK.

The protein belongs to the WD repeat PRL1/PRL2 family. In terms of assembly, belongs to the 40S cdc5-associated complex (or cwf complex), a spliceosome sub-complex reminiscent of a late-stage spliceosome composed of the U2, U5 and U6 snRNAs and at least brr2, cdc5, cwf2/prp3, cwf3/syf1, cwf4/syf3, cwf5/ecm2, spp42/cwf6, cwf7/spf27, cwf8, cwf9, cwf10, cwf11, cwf12, prp45/cwf13, cwf14, cwf15, cwf16, cwf17, cwf18, cwf19, cwf20, cwf21, cwf22, cwf23, cwf24, cwf25, cwf26, cyp7/cwf27, cwf28, cwf29/ist3, lea1, msl1, prp5/cwf1, prp10, prp12/sap130, prp17, prp22, sap61, sap62, sap114, sap145, slu7, smb1, smd1, smd3, smf1, smg1 and syf2.

The protein resides in the nucleus. Its function is as follows. Required for both cell cycle progression at G2/M and pre-mRNA splicing. Interacts genetically with the PRP4 kinase. This chain is Pre-mRNA-splicing factor prp5 (prp5), found in Schizosaccharomyces pombe (strain 972 / ATCC 24843) (Fission yeast).